The sequence spans 106 residues: uncharacterized protein (106 aa).

This is an uncharacterized protein from Thermoproteus tenax virus 1 (strain KRA1) (TTV1).